The sequence spans 129 residues: Small ribosomal subunit protein uS9 (129 aa).

Positions 110 to 129 (VERKKYGKKKARKSFQFSKR) are disordered. The span at 114-129 (KYGKKKARKSFQFSKR) shows a compositional bias: basic residues.

This sequence belongs to the universal ribosomal protein uS9 family.

The sequence is that of Small ribosomal subunit protein uS9 from Chlorobaculum parvum (strain DSM 263 / NCIMB 8327) (Chlorobium vibrioforme subsp. thiosulfatophilum).